The primary structure comprises 196 residues: DnaA initiator-associating protein DiaA (196 aa).

The SIS domain occupies 34-196 (LVHSLLNGNK…DNTLFPHQDD (163 aa)).

Belongs to the SIS family. DiaA subfamily. Homotetramer; dimer of dimers.

Its function is as follows. Required for the timely initiation of chromosomal replication via direct interactions with the DnaA initiator protein. In Salmonella enteritidis PT4 (strain P125109), this protein is DnaA initiator-associating protein DiaA.